We begin with the raw amino-acid sequence, 327 residues long: DNA-directed RNA polymerase subunit alpha (327 aa).

Residues 1–233 (MQNSASEFLK…DQLSIFADLQ (233 aa)) form an alpha N-terminal domain (alpha-NTD) region. The tract at residues 247–327 (VDPILLRPVD…NWPPAGLEKP (81 aa)) is alpha C-terminal domain (alpha-CTD).

This sequence belongs to the RNA polymerase alpha chain family. Homodimer. The RNAP catalytic core consists of 2 alpha, 1 beta, 1 beta' and 1 omega subunit. When a sigma factor is associated with the core the holoenzyme is formed, which can initiate transcription.

It carries out the reaction RNA(n) + a ribonucleoside 5'-triphosphate = RNA(n+1) + diphosphate. Its function is as follows. DNA-dependent RNA polymerase catalyzes the transcription of DNA into RNA using the four ribonucleoside triphosphates as substrates. This is DNA-directed RNA polymerase subunit alpha from Laribacter hongkongensis (strain HLHK9).